The following is a 981-amino-acid chain: Alpha-mannosidase (981 aa).

Positions 23, 25, and 145 each coordinate Zn(2+). Aspartate 145 (nucleophile) is an active-site residue. A glycan (N-linked (GlcNAc...) asparagine) is linked at asparagine 312. Histidine 386 is a Zn(2+) binding site. Disulfide bonds link cysteine 422–cysteine 432, cysteine 442–cysteine 450, and cysteine 800–cysteine 807. Asparagine 446 carries N-linked (GlcNAc...) asparagine glycosylation. Residues 938–957 (KKMKWSVEGDNEQEPQAVRG) are disordered.

It belongs to the glycosyl hydrolase 38 family. Dimer of dimers of heavy and light subunits. Requires Zn(2+) as cofactor. Produced as a precursor which is then proteolytically cleaved into a 66kD heavy subunit and a 44kD light subunit. Cleavage probably occurs in protein bodies/protein storage vacuoles.

It localises to the protein storage vacuole. The catalysed reaction is Hydrolysis of terminal, non-reducing alpha-D-mannose residues in alpha-D-mannosides.. Inhibited by 2,3,4,6-tetra-O-acetyl-5-fluoro-beta-L-gulopyranosyl fluoride which acts as a slow substrate, doubling as a competitive inhibitor as it forms a high steady state concentration of glycosyl-enzyme intermediate that blocks the active site. Inhibited by 2,3,4,6-tetra-O-acetyl-5-fluoro-alpha-D-mannopyranosyl fluoride which also acts as a slow substrate but no intermediates accumulate. Inhibited by EDTA. Inhibited by metal ion Cu(2+). Inhibited by metal ions Fe(2+), Cd(2+) and Co(2+). Inhibited by metal ions Ag(+) and Hg(2+). Competitively inhibited by mannono-1-4-lactone and mannono-1-5-lactone. Inhibited by swainsonine but not by 1-desoxymannojirimycin. Inhibited by pyrrolidine-3,4-diol derivatives. Functionally, liberates mannose from p-nitrophenyl-alpha-D-mannoside. Liberates mannose from further alpha-D-mannosides including methyl-, benzyl-alpha-D-mannoside, 1-6-linked di-, tri- and tetrasaccharides of alpha-D-mannose and mannosyl-rhamnose. Liberates mannose from various glycoproteins like ovalbumin and ovomucoid. Does not hydrolyze beta-D-mannosides. Has glycosyltransferase activity, forming disaccharides from mannose and lyxose but not from glucose, galactose, ribose, xylose or arabinose. In Canavalia ensiformis (Jack bean), this protein is Alpha-mannosidase.